The sequence spans 374 residues: uncharacterized protein (374 aa).

The disordered stretch occupies residues 1–46 (MVNEEEKDLTAEGDSNNTGVSPDSIKNKTLDFYPKEKTTERKTRSR). Residues 25-46 (IKNKTLDFYPKEKTTERKTRSR) show a composition bias toward basic and acidic residues. 6 helical membrane-spanning segments follow: residues 70-90 (YAYI…FIAA), 127-147 (WVFY…KIGI), 153-173 (TIVY…IPVI), 199-219 (IWLF…YGLV), 242-262 (ISIA…MLAI), and 312-332 (YFFG…AITI).

The protein to M.genitalium MG432 and MG443.

The protein resides in the cell membrane. This is an uncharacterized protein from Spiroplasma citri.